A 376-amino-acid polypeptide reads, in one-letter code: Succinyl-diaminopimelate desuccinylase (376 aa).

Histidine 67 contacts Zn(2+). Aspartate 69 is an active-site residue. Aspartate 100 serves as a coordination point for Zn(2+). Glutamate 134 acts as the Proton acceptor in catalysis. Glutamate 135, glutamate 163, and histidine 349 together coordinate Zn(2+).

It belongs to the peptidase M20A family. DapE subfamily. As to quaternary structure, homodimer. The cofactor is Zn(2+). Requires Co(2+) as cofactor.

It carries out the reaction N-succinyl-(2S,6S)-2,6-diaminopimelate + H2O = (2S,6S)-2,6-diaminopimelate + succinate. It functions in the pathway amino-acid biosynthesis; L-lysine biosynthesis via DAP pathway; LL-2,6-diaminopimelate from (S)-tetrahydrodipicolinate (succinylase route): step 3/3. Its function is as follows. Catalyzes the hydrolysis of N-succinyl-L,L-diaminopimelic acid (SDAP), forming succinate and LL-2,6-diaminopimelate (DAP), an intermediate involved in the bacterial biosynthesis of lysine and meso-diaminopimelic acid, an essential component of bacterial cell walls. The chain is Succinyl-diaminopimelate desuccinylase from Pseudoalteromonas atlantica (strain T6c / ATCC BAA-1087).